Reading from the N-terminus, the 103-residue chain is Small ribosomal subunit protein uS14c (103 aa).

This sequence belongs to the universal ribosomal protein uS14 family. In terms of assembly, part of the 30S ribosomal subunit.

It is found in the plastid. The protein localises to the chloroplast. Binds 16S rRNA, required for the assembly of 30S particles. This is Small ribosomal subunit protein uS14c from Lolium perenne (Perennial ryegrass).